The chain runs to 308 residues: Phosphoribosylaminoimidazole-succinocarboxamide synthase (308 aa).

This sequence belongs to the SAICAR synthetase family.

The catalysed reaction is 5-amino-1-(5-phospho-D-ribosyl)imidazole-4-carboxylate + L-aspartate + ATP = (2S)-2-[5-amino-1-(5-phospho-beta-D-ribosyl)imidazole-4-carboxamido]succinate + ADP + phosphate + 2 H(+). Its pathway is purine metabolism; IMP biosynthesis via de novo pathway; 5-amino-1-(5-phospho-D-ribosyl)imidazole-4-carboxamide from 5-amino-1-(5-phospho-D-ribosyl)imidazole-4-carboxylate: step 1/2. In Xanthomonas oryzae pv. oryzae (strain PXO99A), this protein is Phosphoribosylaminoimidazole-succinocarboxamide synthase.